The following is a 237-amino-acid chain: uncharacterized protein (237 aa).

A run of 7 helical transmembrane segments spans residues 19-39 (ILNG…GLAW), 51-71 (YDSP…YGLS), 81-101 (IAGV…ASLV), 106-126 (IIIV…AGLL), 136-156 (FIIM…AALM), 159-179 (RPIW…ISHG), and 209-229 (LYYY…TLVW).

Its subcellular location is the cell membrane. This is an uncharacterized protein from Escherichia coli (strain K12).